Reading from the N-terminus, the 484-residue chain is Aldehyde dehydrogenase family 3 member H1 (484 aa).

196 to 201 contacts NAD(+); sequence GSSKIG. Catalysis depends on glutamate 218, which acts as the Proton acceptor. Cysteine 253 acts as the Nucleophile in catalysis.

Belongs to the aldehyde dehydrogenase family. As to quaternary structure, homodimer and homomultimer. Isoform alpha is expressed in expanded leaves and flowers. Detected in seedlings. Isoform beta is mainly expressed in flowers. Detected in leaves and seedlings.

The catalysed reaction is an aldehyde + NAD(+) + H2O = a carboxylate + NADH + 2 H(+). Its activity is regulated as follows. Thiol-based regulation. Inactivation after dimerization under oxidizing conditions. Its function is as follows. Involved in oxidative stress tolerance by detoxifying reactive aldehydes derived from lipid peroxidation. Medium- to long-chain saturated aldehydes are preferred substrates, while the short-chain aldehyde propanal is a weak substrate. Is strictely NAD(+) specific. This chain is Aldehyde dehydrogenase family 3 member H1 (ALDH3H1), found in Arabidopsis thaliana (Mouse-ear cress).